Reading from the N-terminus, the 100-residue chain is uncharacterized protein (100 aa).

The first 18 residues, 1 to 18 (MWGFLVLKARWLVTPVRT), serve as a signal peptide directing secretion. Residues 48-86 (LTRGVIRVSPQERSQQNQSAPKGPTPSTRPKPRTLGPQA) form a disordered region. The segment covering 58-69 (QERSQQNQSAPK) has biased composition (polar residues). Residue N64 is glycosylated (N-linked (GlcNAc...) asparagine).

It localises to the secreted. This is an uncharacterized protein from Homo sapiens (Human).